The chain runs to 543 residues: Probable ubiquitin-conjugating enzyme E2 26 (543 aa).

The segment at Met-1 to Arg-21 is disordered. Residues Asn-271 to Val-431 form the UBC core domain. Cys-357 (glycyl thioester intermediate) is an active-site residue. Positions Leu-514–Arg-543 are disordered. Residues Lys-532–Arg-543 are compositionally biased toward basic residues.

This sequence belongs to the ubiquitin-conjugating enzyme family.

The enzyme catalyses S-ubiquitinyl-[E1 ubiquitin-activating enzyme]-L-cysteine + [E2 ubiquitin-conjugating enzyme]-L-cysteine = [E1 ubiquitin-activating enzyme]-L-cysteine + S-ubiquitinyl-[E2 ubiquitin-conjugating enzyme]-L-cysteine.. It participates in protein modification; protein ubiquitination. Its function is as follows. Accepts the ubiquitin from the E1 complex and catalyzes its covalent attachment to other proteins. This is Probable ubiquitin-conjugating enzyme E2 26 (UBC26) from Arabidopsis thaliana (Mouse-ear cress).